Consider the following 411-residue polypeptide: S-adenosylmethionine synthase (411 aa).

ATP is bound at residue H15. Position 17 (D17) interacts with Mg(2+). E43 is a K(+) binding site. L-methionine-binding residues include E56 and Q100. The tract at residues 100 to 110 is flexible loop; that stretch reads QSPDIAQGVNE. Residues 171 to 173, 248 to 249, D257, 263 to 264, A280, and K284 each bind ATP; these read DGK, KF, and RK. D257 is an L-methionine binding site. K288 lines the L-methionine pocket.

It belongs to the AdoMet synthase family. In terms of assembly, homotetramer; dimer of dimers. Mg(2+) serves as cofactor. K(+) is required as a cofactor.

Its subcellular location is the cytoplasm. The catalysed reaction is L-methionine + ATP + H2O = S-adenosyl-L-methionine + phosphate + diphosphate. Its pathway is amino-acid biosynthesis; S-adenosyl-L-methionine biosynthesis; S-adenosyl-L-methionine from L-methionine: step 1/1. In terms of biological role, catalyzes the formation of S-adenosylmethionine (AdoMet) from methionine and ATP. The overall synthetic reaction is composed of two sequential steps, AdoMet formation and the subsequent tripolyphosphate hydrolysis which occurs prior to release of AdoMet from the enzyme. This chain is S-adenosylmethionine synthase, found in Synechococcus sp. (strain CC9605).